The primary structure comprises 360 residues: MEPATALLIVDYYDYTSPDPPFLETPSHLSYTSVFLPIFYTVVFLTGVVGNFILMIALHFKRGNRRLIDIFIINLAASDFIFLVTVPLWMDKEASLGLWRTGSFLCKGSSYVISVNMHCSVFLLTCMSMDRYLAIMHPALAKRLRRRSSAYAVCAVVWIISCVLGLPTLLSRELTHIEGKPYCAEKKPTSLKLMWGLVALITTFFVPLLSIVTCYCCITRRLCAHYQQSGKHNKKLKKSIKIVIIAVAAFTVSWVPFNTFKLLAIVSGFQPEGLFHSEALQLAMNVTGPLAFASSCVNPLIYYVFDSYIRRAIVRCLCPCLKTHNFGSSTETSDSHLTKALSNFIHAEDFIRRRKRSVSL.

At Met-1–Ser-33 the chain is on the extracellular side. Residues Val-34 to Leu-54 form a helical membrane-spanning segment. Residues Met-55 to Asp-69 are Cytoplasmic-facing. A helical transmembrane segment spans residues Ile-70–Met-90. Residues Asp-91–Ser-120 are Extracellular-facing. The helical transmembrane segment at Val-121–Ala-141 threads the bilayer. The Cytoplasmic segment spans residues Lys-142–Ser-149. A helical transmembrane segment spans residues Ala-150–Leu-170. At Ser-171–Lys-192 the chain is on the extracellular side. Residues Leu-193 to Thr-213 form a helical membrane-spanning segment. Over Cys-214 to Ser-239 the chain is Cytoplasmic. A helical transmembrane segment spans residues Ile-240 to Phe-260. Residues Lys-261–Met-284 lie on the Extracellular side of the membrane. Residues Asn-285 to Phe-305 form a helical membrane-spanning segment. Residues Asp-306–Leu-360 are Cytoplasmic-facing. A Phosphoserine modification is found at Ser-359.

It belongs to the G-protein coupled receptor 1 family. In terms of assembly, interacts with adapter YWHAE; this interaction promotes ER-to-Golgi transport of GPR15. Post-translationally, phosphorylation is necessary for YWHAE binding and efficient surface expression. O-glycosylated. Sialylated O-glycans in the N-terminal tail inhibits binding of GPR15LG. In terms of processing, sulfation is required for efficient binding of GPR15LG. As to expression, highly expressed in gut tissues and lymphoid organs, largely restricted to TCRbeta+ cells. Expressed in fetal thymic dendritic epidermal T-cell precursors.

It is found in the cell membrane. Functionally, g protein-coupled receptor that plays an important role in immune homeostasis. Acts via its natural ligand GPR15LG, a chemokine-like polypeptide strongly expressed in gastrointestinal tissues. GPR15-GPR15LG signaling axis regulates intestinal homeostasis and inflammation through the migration of immune cells. Controls thereby the specific homing of T-cells, particularly FOXP3+ regulatory T-cells (Tregs), to the large intestine lamina propria. Also required for skin localization of thymus-derived dendritic epidermal T-cells. Plays an important role in mediating cytoprotective function as well as angiogenesis of thrombomodulin. Mechanistically, preferentially signals through the Gi/o pathway to inhibit adenylate cyclase activity and activate a phosphatidylinositol-calcium second messenger system that regulates the release of Ca(2+) ions from intracellular stores. This chain is G-protein coupled receptor 15 (Gpr15), found in Mus musculus (Mouse).